The primary structure comprises 650 residues: Aminopeptidase B (650 aa).

298 to 302 (GGMEN) contributes to the substrate binding site. Position 325 (His325) interacts with Zn(2+). The Proton acceptor role is filled by Glu326. Residues His329 and Glu348 each coordinate Zn(2+). At Lys446 the chain carries N6-acetyllysine.

The protein belongs to the peptidase M1 family. In terms of assembly, monomer. The cofactor is Zn(2+).

It is found in the secreted. The catalysed reaction is Release of N-terminal Arg and Lys from oligopeptides when P1' is not Pro. Also acts on arylamides of Arg and Lys.. In terms of biological role, exopeptidase which selectively removes arginine and/or lysine residues from the N-terminus of several peptide substrates including Arg(0)-Leu-enkephalin, Arg(0)-Met-enkephalin and Arg(-1)-Lys(0)-somatostatin-14. Can hydrolyze leukotriene A4 (LTA-4) into leukotriene B4 (LTB-4). The protein is Aminopeptidase B (Rnpep) of Mus musculus (Mouse).